The following is a 124-amino-acid chain: Small ribosomal subunit protein eS6 (124 aa).

Belongs to the eukaryotic ribosomal protein eS6 family.

This is Small ribosomal subunit protein eS6 from Methanococcus maripaludis (strain C6 / ATCC BAA-1332).